We begin with the raw amino-acid sequence, 678 residues long: MHGRPRNASKPEEEAASAAKAVQLRSLQSQFMTNHHDKIYTNEAIELSTKLLEINPEAYTAWNYRKLAVEDRLARIEPDPNLVSAILDEELRVVESALRQNFKSYGAWHHRKWVLSKGHSSVGNELRLLEKFQKLDSRNFHAWNYRRFVVELTNRSEQDELQYTDDMINNNFSNYSAWHNRSVLLSSLLAQNADGFMPNIKIPEEYDFVHSAIFTEPDDQSGWFYHLWLLDQTLNVETPLLTSSWPSHGSSIILSGAGCLSGSSSMFTTFCSESGSFPLILYFDQAVGGVSSSTVTIDSELKGNEGLVWEPIPNKNSQVSCVWVARLKYVSSDPCEYKVKIRVGNSPGIVSSRGYNFNAPYEFVFTAHVHDTVEDSQEGIVSWTDGFDIWDAKSKDLNSLVTLDRLNAEMDFKWRQEAIDSEVECFGILPDSKIGKLTLARLLMAREAMVSDDAVKGVHYEEILQLYNDLMALDSSHYQYYKDEHSKAFLHKVTSSSESLSRHLLRYRDMNNLVCLRLNNLSLSRIASVEKLLFVQMLDLSHNELHSTEGLEAMQLLSCLNLSHNRIRSFSALDSLRHVKQLKVLDVSHNHIGKHSVDTTRYLCSSPLSNSELGQDDVGKQNPGLVTKYWDAYCVLTDLNLKQLDIAGNEIAGEEFSSFVLQVVPKLVWLDGQKKLGN.

PFTA repeat units follow at residues 40–74, 86–120, 121–155, 156–190, and 201–235; these read YTNE…DRLA, ILDE…KGHS, SVGN…LTNR, SEQD…SLLA, and KIPE…QTLN. 5 LRR repeats span residues 510–532, 533–554, 555–578, 580–604, and 638–663; these read MNNL…VEKL, LFVQ…LEAM, QLLS…SLRH, KQLK…RYLC, and DLNL…VLQV.

It belongs to the protein prenyltransferase subunit alpha family. As to quaternary structure, heterotrimer composed of the alpha subunit RGTA, the beta subunit RGTB and REP; within this trimer, RGTA and RGTB form the catalytic component, while REP mediates peptide substrate binding.

The catalysed reaction is geranylgeranyl diphosphate + L-cysteinyl-[protein] = S-geranylgeranyl-L-cysteinyl-[protein] + diphosphate. Its activity is regulated as follows. The enzymatic reaction requires the aid of the Rab escort protein REP. Its function is as follows. Catalyzes the transfer of a geranylgeranyl moiety from geranylgeranyl diphosphate to both cysteines of Rab proteins with the C-terminal sequence -CCXX, CXXX, -XCCX and -XCXC, such as RABA1A, RABA2A, RABF2A and RABG2. In vitro, can prenylate PGGTI targets with the C-terminal Cys-aliphatic-aliphatic-X (CaaX) with leucine in the terminal position. Substrates with the C-terminal sequence -CSIL such as ARAC11/ROP1 or GG2/AGG2 are prenylated independently of REP and when the alpha subunit is associated with a beta subunit (RGTB1 or RGTB2). The chain is Geranylgeranyl transferase type-2 subunit alpha 1 from Arabidopsis thaliana (Mouse-ear cress).